The chain runs to 399 residues: Centrosomal protein 43 (399 aa).

Residues 70–102 (DGRLVASLVAEFLQFFNLDFTLAVFHPETSTIQ) enclose the LisH domain. Disordered stretches follow at residues 142 to 216 (PASV…SKSS) and 236 to 311 (DARD…KRGS). Residues serine 152 and serine 160 each carry the phosphoserine modification. Polar residues predominate over residues 163-172 (GKSSANSTPS). A Phosphothreonine modification is found at threonine 170. The segment covering 175-186 (PRYKGQGKKKTI) has biased composition (basic residues). The segment covering 197-216 (SETSQSEPSVSLSESKSKSS) has biased composition (low complexity). Serine 202 is subject to Phosphoserine. Positions 246-256 (DGDDVEGDSFF) are enriched in acidic residues. Basic and acidic residues predominate over residues 259-275 (PIPKPEKTYGWRAEPRK). The span at 290–302 (RSGLSSLAGAPSL) shows a compositional bias: low complexity. Residues serine 301 and serine 326 each carry the phosphoserine modification. Positions 328–354 (GLGTGEDEDYADDFNSASHRSEKSELS) are disordered. The residue at position 337 (tyrosine 337) is a Phosphotyrosine.

The protein belongs to the CEP43 family. As to quaternary structure, homodimer. Part of a ternary complex that contains CEP350, CEP43 and MAPRE1. Interacts directly with CEP350 and MAPRE1. Interacts with CEP19. Interacts (via N-terminus) with CEP350 (via C-terminus).

Its subcellular location is the cytoplasm. It localises to the cytoskeleton. The protein resides in the microtubule organizing center. It is found in the centrosome. The protein localises to the centriole. Its subcellular location is the cilium basal body. Its function is as follows. Required for anchoring microtubules to the centrosomes. Required for ciliation. The sequence is that of Centrosomal protein 43 from Mus musculus (Mouse).